The chain runs to 415 residues: MIIAIQTLIFFRQSLLTALDRLLRPYFQKFALSLTKSSFESDDDEPDENVFAEYDDEKGVIFFPPMYVQRYAAIVDCLLDERWSGKLDKVVDLGYHDMSFIKYLKEVSGIKSILGVDLETIPLQCSSDLLSCNEYAPKRETPLQISLLQGNAADPDYRLIGCDAVIAIEMIEHMLPHDLERLVHTVFAFIKPWIVIFTTPNDFKDVITGDINICKFNEKYLHRLNCTTLQVKKFSKTTQGLMAKNKVDALVHTREVVEEIKHLTKMLNFNKSGLNQQDEKTHIWYNFNWGENAPYWNQYYKIVREYNYPFETKSDDCRILDLISDEMNRLIDLQYDDILSVDLNKLEIPLQHLMQTVQHITDDVENVRELLEWNGYEVVDDMVIYSRLAIDNVTIDSQIDDWQENESVSDVKKFN.

S-adenosyl-L-methionine-binding residues include serine 99 and aspartate 117. Residues glutamate 169, glutamate 172, and histidine 173 each coordinate Mg(2+).

Belongs to the methyltransferase superfamily. HEN1 family. The cofactor is Mg(2+).

It localises to the cytoplasm. It catalyses the reaction small RNA 3'-end nucleotide + S-adenosyl-L-methionine = small RNA 3'-end 2'-O-methylnucleotide + S-adenosyl-L-homocysteine + H(+). In terms of biological role, methyltransferase that adds a 2'-O-methyl group at the 3'-end of piRNAs, a class of 24 to 30 nucleotide RNAs that are generated by a Dicer-independent mechanism and are primarily derived from transposons and other repeated sequence elements. This probably protects the 3'-end of piRNAs from uridylation activity and subsequent degradation. Stabilization of piRNAs is essential for gametogenesis. The chain is Small RNA 2'-O-methyltransferase from Bombyx mori (Silk moth).